The chain runs to 666 residues: Probable potassium transport system protein Kup (666 aa).

Transmembrane regions (helical) follow at residues 16-36 (GFII…LYTI), 58-78 (ISLI…LIAL), 100-120 (PWLI…GALT), 141-161 (IYQN…VLFG), 165-185 (FGTG…FSFL), 221-241 (IFIL…YSDL), 253-273 (WPFV…WILA), 294-314 (VYLV…LISG), 343-363 (LYIP…VLAF), 373-393 (YGLA…YYLI), 399-419 (PILA…FFLA), and 424-444 (FMHG…VMFI).

It belongs to the HAK/KUP transporter (TC 2.A.72) family.

The protein resides in the cell membrane. It carries out the reaction K(+)(in) + H(+)(in) = K(+)(out) + H(+)(out). Functionally, transport of potassium into the cell. Likely operates as a K(+):H(+) symporter. In Streptococcus pyogenes serotype M1, this protein is Probable potassium transport system protein Kup.